Here is a 197-residue protein sequence, read N- to C-terminus: Probable proteasome subunit beta type-4 (197 aa).

The protein belongs to the peptidase T1B family. As to quaternary structure, the 26S proteasome consists of a 20S proteasome core and two 19S regulatory subunits. The 20S proteasome core is composed of 28 subunits that are arranged in four stacked rings, resulting in a barrel-shaped structure. The two end rings are each formed by seven alpha subunits, and the two central rings are each formed by seven beta subunits. The catalytic chamber with the active sites is on the inside of the barrel.

Its subcellular location is the cytoplasm. The protein localises to the nucleus. Functionally, non-catalytic component of the proteasome which degrades poly-ubiquitinated proteins in the cytoplasm and in the nucleus. It is essential for the regulated turnover of proteins and for the removal of misfolded proteins. The proteasome is a multicatalytic proteinase complex that is characterized by its ability to cleave peptides with Arg, Phe, Tyr, Leu, and Glu adjacent to the leaving group at neutral or slightly basic pH. It has an ATP-dependent proteolytic activity. The polypeptide is Probable proteasome subunit beta type-4 (PRE1) (Encephalitozoon cuniculi (strain GB-M1) (Microsporidian parasite)).